The following is a 395-amino-acid chain: Type III polyketide synthase A (395 aa).

Position 63–70 (63–70) interacts with CoA; it reads KLEHLCKT. C172 serves as the catalytic Nucleophile. 224 to 225 is a binding site for substrate; it reads GD. CoA is bound by residues L274, 314-317, and A317; that span reads GGPA.

The protein belongs to the thiolase-like superfamily. Chalcone/stilbene synthases family. In terms of assembly, homodimer. Interacts with 4CLL1/ACOS5 and TKPR1. In terms of tissue distribution, expressed in flowers and flower buds (at protein level), and, at very low levels, in roots, seedlings, leaves and stems. Mostly confined to anther tapetal cells.

The protein resides in the endoplasmic reticulum. It participates in secondary metabolite biosynthesis; flavonoid biosynthesis. Functionally, plant type III polyketide synthases (PKSs) that catalyzes the condensation of malonyl-CoA units with various CoA ester starter molecules to generate a diverse array of natural products including long-chain alkyl alpha-pyrones. Accepts up to C(20) chain-length fatty acyl CoAs as starter substrates, and carries out sequential condensations with malonyl-CoA to produce triketide and tetraketide alpha-pyrones, potential sporopollenin precursors. Favorite substrates for are midchain- and v-hydroxylated fatty acyl-CoAs (e.g. 12-hydroxyoctadecanoyl-CoA and 16-hydroxyhexadecanoyl-CoA). Required for pollen development and sporopollenin biosynthesis, the major constituent of exine in the outer pollen wall. In vitro, can use 4-coumaroyl-coenzyme A as substrate to produce bis-noryangonin and fatty acyl-coenzyme A as substrate to produce medium-chain alkyl pyrones. May play a role in both the synthesis of pollen fatty acids and phenolics found in exine. This chain is Type III polyketide synthase A, found in Arabidopsis thaliana (Mouse-ear cress).